The chain runs to 547 residues: Chaperonin GroEL (547 aa).

Residues 30 to 33 (TLGP), K51, 87 to 91 (DGTTT), G415, 479 to 481 (NAA), and D495 each bind ATP. Residues 525–547 (PKEDSPGAGAGMGGMGGMGGMDM) are disordered. The span at 532–547 (AGAGMGGMGGMGGMDM) shows a compositional bias: gly residues.

Belongs to the chaperonin (HSP60) family. In terms of assembly, forms a cylinder of 14 subunits composed of two heptameric rings stacked back-to-back. Interacts with the co-chaperonin GroES.

The protein localises to the cytoplasm. It catalyses the reaction ATP + H2O + a folded polypeptide = ADP + phosphate + an unfolded polypeptide.. In terms of biological role, together with its co-chaperonin GroES, plays an essential role in assisting protein folding. The GroEL-GroES system forms a nano-cage that allows encapsulation of the non-native substrate proteins and provides a physical environment optimized to promote and accelerate protein folding. In Nitrosomonas eutropha (strain DSM 101675 / C91 / Nm57), this protein is Chaperonin GroEL.